A 55-amino-acid chain; its full sequence is Large ribosomal subunit protein bL33C (55 aa).

The protein belongs to the bacterial ribosomal protein bL33 family.

In Kineococcus radiotolerans (strain ATCC BAA-149 / DSM 14245 / SRS30216), this protein is Large ribosomal subunit protein bL33C.